Here is a 363-residue protein sequence, read N- to C-terminus: MTIGLSCNALKYGGGLERYAIDLARGLADAGVRPLVFARSFDSSVPEYQCVEPRRINVSFLPGKCRDAWFSWRLRAARRAAPVDVLIGCNRVDSSDIAICGGTHLGFLDAIGRMPTFSDRRQIALERRQYARARFVVAHSMLMRDELRRFYGLSDDKIRVLFPPVDAARFTPVDAVRRAELRTRFGFADDEVVLLFPSSSHERKGLPLIEAILRDAGPRVVVAVAGRPPERTSERLRYVGYVKDIEDGYRAADFTILASKYEPFGLVGVESVMCGTPVILPSNIGCCDAIAPSAKLVFAPGDAAGLRGMLDEAVRRVRAGAVRVESGAAARAAIQYDPSVARHVAQLLDLAAEAASDRRNGGR.

This sequence belongs to the glycosyltransferase group 1 family. Glycosyltransferase 4 subfamily.

Probably a transglycosylase. Probably involved in synthesis of the outer membrane receptor for a cellular contact-dependent growth inhibition (CDI) system. This Burkholderia thailandensis (strain ATCC 700388 / DSM 13276 / CCUG 48851 / CIP 106301 / E264) protein is Probable transglycosylase BTH_I0986.